Reading from the N-terminus, the 533-residue chain is Purine-cytosine permease FCY2 (533 aa).

Residues 1–98 (MLEEGNNVYE…NAASMWFSAN (98 aa)) lie on the Cytoplasmic side of the membrane. A Glycyl lysine isopeptide (Lys-Gly) (interchain with G-Cter in ubiquitin) cross-link involves residue Lys-16. Ser-18 is subject to Phosphoserine. A helical transmembrane segment spans residues 99–119 (MVIASYALGALGPMVFGLNFG). Residues 120–121 (QS) are Extracellular-facing. The chain crosses the membrane as a helical span at residues 122 to 141 (VLVIIFFNIMGLIFVAFFSV). Over 142-198 (FGAELGLRQMILSRYLVGNVTARIFSLINVIACVGWGIVNTSVSAQLLNMVNEGSGH) the chain is Cytoplasmic. The surface seeking stretch occupies residues 165 to 184 (IFSLINVIACVGWGIVNTSV). Residues 199–218 (VCPIWAGCLIIIGGTVLVTF) traverse the membrane as a helical segment. Residues 219–256 (FGYSVIHAYEKWSWVPNFAVFLVIIAQLSRSGKFKGGE) are Extracellular-facing. Residues 257 to 276 (WVGGATTAGSVLSFGSSIFG) form a helical membrane-spanning segment. Residues 277–300 (FAAGWTTYAADYTVYMPKSTNKYK) are Cytoplasmic-facing. A helical membrane pass occupies residues 301-320 (IFFSLVAGLAFPLFFTMILG). Residues 321 to 347 (AASAMAALNDPTWKAYYDKNAMGGVIY) lie on the Extracellular side of the membrane. The chain crosses the membrane as a helical span at residues 348–367 (AILVPNSLNGFGQFCCVLLA). Over 368–398 (LSTIANNIPNMYTVALSAQALWAPLAKIPRV) the chain is Cytoplasmic. A helical transmembrane segment spans residues 399–418 (VWTMAGNAATLGISIPATYY). The Extracellular segment spans residues 419–465 (FDGFMENFMDSIGYYLAIYIAISCSEHFFYRRSFSAYNIDDWDNWEH). The helical transmembrane segment at 466–485 (LPIGIAGTAALIVGAFGVAL) threads the bilayer. At 486-533 (GMCQTYWVGEIGRLIGKYGGDIGFELGASWAFIIYNILRPLELKYFGR) the chain is on the cytoplasmic side.

The protein belongs to the purine-cytosine permease (2.A.39) family. In terms of processing, not N-glycosylated.

The protein resides in the membrane. In terms of biological role, this permease has a broad specificity towards purines, and also transport cytosine and 5-methylcytosine but neither uracil nor thymine. This chain is Purine-cytosine permease FCY2 (FCY2), found in Saccharomyces cerevisiae (strain ATCC 204508 / S288c) (Baker's yeast).